A 117-amino-acid polypeptide reads, in one-letter code: NADH-ubiquinone oxidoreductase chain 3 (117 aa).

The next 3 helical transmembrane spans lie at 1 to 21, 58 to 78, and 86 to 106; these read MKFIFMYFIFIILISSILLLL, FLMTMMFLIFDVEIILFLPII, and TMISYLMISIFLILLITTLIL.

The protein belongs to the complex I subunit 3 family.

It localises to the mitochondrion membrane. It catalyses the reaction a ubiquinone + NADH + 5 H(+)(in) = a ubiquinol + NAD(+) + 4 H(+)(out). In terms of biological role, core subunit of the mitochondrial membrane respiratory chain NADH dehydrogenase (Complex I) that is believed to belong to the minimal assembly required for catalysis. Complex I functions in the transfer of electrons from NADH to the respiratory chain. The immediate electron acceptor for the enzyme is believed to be ubiquinone. The chain is NADH-ubiquinone oxidoreductase chain 3 (ND3) from Apis mellifera ligustica (Common honeybee).